A 57-amino-acid polypeptide reads, in one-letter code: Large ribosomal subunit protein uL30 (57 aa).

The protein belongs to the universal ribosomal protein uL30 family. Part of the 50S ribosomal subunit.

The polypeptide is Large ribosomal subunit protein uL30 (Clostridium acetobutylicum (strain ATCC 824 / DSM 792 / JCM 1419 / IAM 19013 / LMG 5710 / NBRC 13948 / NRRL B-527 / VKM B-1787 / 2291 / W)).